A 436-amino-acid chain; its full sequence is Glutamyl-tRNA reductase (436 aa).

Substrate is bound by residues 49–52, Ser109, 114–116, and Gln120; these read TCNR and EGQ. The active-site Nucleophile is the Cys50. Residue 198-203 coordinates NADP(+); the sequence is GAGRMS.

It belongs to the glutamyl-tRNA reductase family. Homodimer.

The catalysed reaction is (S)-4-amino-5-oxopentanoate + tRNA(Glu) + NADP(+) = L-glutamyl-tRNA(Glu) + NADPH + H(+). It participates in porphyrin-containing compound metabolism; protoporphyrin-IX biosynthesis; 5-aminolevulinate from L-glutamyl-tRNA(Glu): step 1/2. The protein operates within porphyrin-containing compound metabolism; chlorophyll biosynthesis. Catalyzes the NADPH-dependent reduction of glutamyl-tRNA(Glu) to glutamate 1-semialdehyde (GSA). This Prochlorococcus marinus (strain MIT 9301) protein is Glutamyl-tRNA reductase.